The chain runs to 243 residues: tRNA pseudouridine synthase A (243 aa).

The Nucleophile role is filled by Asp-53. Tyr-111 contacts substrate.

The protein belongs to the tRNA pseudouridine synthase TruA family. Homodimer.

The enzyme catalyses uridine(38/39/40) in tRNA = pseudouridine(38/39/40) in tRNA. Its function is as follows. Formation of pseudouridine at positions 38, 39 and 40 in the anticodon stem and loop of transfer RNAs. This Chlorobium phaeovibrioides (strain DSM 265 / 1930) (Prosthecochloris vibrioformis (strain DSM 265)) protein is tRNA pseudouridine synthase A.